Here is a 414-residue protein sequence, read N- to C-terminus: Secernin-1 (414 aa).

It belongs to the peptidase C69 family. Secernin subfamily.

The protein localises to the cytoplasm. Functionally, regulates exocytosis in mast cells. Increases both the extent of secretion and the sensitivity of mast cells to stimulation with calcium. The sequence is that of Secernin-1 (Scrn1) from Rattus norvegicus (Rat).